A 650-amino-acid polypeptide reads, in one-letter code: Gamma-tubulin complex component 4 homolog (650 aa).

At Ser214 the chain carries Phosphoserine. Thr216 is modified (phosphothreonine). Ser218 bears the Phosphoserine mark.

It belongs to the TUBGCP family.

The protein localises to the cytoplasm. It localises to the cytoskeleton. Its subcellular location is the microtubule organizing center. It is found in the centrosome. Gamma-tubulin complex is necessary for microtubule nucleation at the centrosome. This chain is Gamma-tubulin complex component 4 homolog (Grip75), found in Drosophila melanogaster (Fruit fly).